Here is a 174-residue protein sequence, read N- to C-terminus: Adipose-secreted signaling protein (174 aa).

Alanine 2 is subject to N-acetylalanine. At threonine 147 the chain carries Phosphothreonine.

Belongs to the ADISSP family.

The protein localises to the secreted. In terms of biological role, adipocyte-secreted protein (adipokine) that acts as a key regulator for white adipose tissue (WAT) thermogenesis and glucose homeostasis at least in part through activation of protein kinase A (PKA). This Homo sapiens (Human) protein is Adipose-secreted signaling protein.